Consider the following 354-residue polypeptide: Dihydroorotate dehydrogenase (quinone) (354 aa).

Residues 70 to 74 (AGFDK) and T94 contribute to the FMN site. K74 lines the substrate pocket. 119 to 123 (NAMGF) lines the substrate pocket. The FMN site is built by N148 and N181. Position 181 (N181) interacts with substrate. The active-site Nucleophile is the S184. N186 contacts substrate. FMN is bound by residues K217 and T245. Position 246–247 (246–247 (NT)) interacts with substrate. FMN-binding positions include G265, G294, and 315–316 (YS).

The protein belongs to the dihydroorotate dehydrogenase family. Type 2 subfamily. Monomer. Requires FMN as cofactor.

The protein localises to the cell membrane. It carries out the reaction (S)-dihydroorotate + a quinone = orotate + a quinol. Its pathway is pyrimidine metabolism; UMP biosynthesis via de novo pathway; orotate from (S)-dihydroorotate (quinone route): step 1/1. Catalyzes the conversion of dihydroorotate to orotate with quinone as electron acceptor. This Sulfurovum sp. (strain NBC37-1) protein is Dihydroorotate dehydrogenase (quinone).